The following is a 596-amino-acid chain: Chaperone protein DnaK (596 aa).

The residue at position 180 (Thr-180) is a Phosphothreonine; by autocatalysis.

The protein belongs to the heat shock protein 70 family.

Functionally, acts as a chaperone. The chain is Chaperone protein DnaK from Thermotoga neapolitana (strain ATCC 49049 / DSM 4359 / NBRC 107923 / NS-E).